The chain runs to 468 residues: 3-isopropylmalate dehydratase large subunit (468 aa).

The tract at residues 53 to 74 is disordered; that stretch reads QPSKTVATMDHNVPTDSRDLAG. [4Fe-4S] cluster-binding residues include C347, C407, and C410.

It belongs to the aconitase/IPM isomerase family. LeuC type 1 subfamily. In terms of assembly, heterodimer of LeuC and LeuD. It depends on [4Fe-4S] cluster as a cofactor.

The enzyme catalyses (2R,3S)-3-isopropylmalate = (2S)-2-isopropylmalate. It functions in the pathway amino-acid biosynthesis; L-leucine biosynthesis; L-leucine from 3-methyl-2-oxobutanoate: step 2/4. Its function is as follows. Catalyzes the isomerization between 2-isopropylmalate and 3-isopropylmalate, via the formation of 2-isopropylmaleate. This Pasteurella multocida (strain Pm70) protein is 3-isopropylmalate dehydratase large subunit.